The sequence spans 287 residues: ATP synthase subunit a (287 aa).

A run of 6 helical transmembrane segments spans residues 37 to 57 (LDSV…MWLA), 96 to 116 (FIAP…AMDL), 149 to 169 (LGLS…IKGL), 187 to 207 (PVFA…EYVA), 224 to 244 (ELVF…LSGV), and 266 to 286 (TLQA…AHEA).

Belongs to the ATPase A chain family. As to quaternary structure, F-type ATPases have 2 components, CF(1) - the catalytic core - and CF(0) - the membrane proton channel. CF(1) has five subunits: alpha(3), beta(3), gamma(1), delta(1), epsilon(1). CF(0) has three main subunits: a(1), b(2) and c(9-12). The alpha and beta chains form an alternating ring which encloses part of the gamma chain. CF(1) is attached to CF(0) by a central stalk formed by the gamma and epsilon chains, while a peripheral stalk is formed by the delta and b chains.

It localises to the cell inner membrane. Its function is as follows. Key component of the proton channel; it plays a direct role in the translocation of protons across the membrane. The polypeptide is ATP synthase subunit a (Acidovorax sp. (strain JS42)).